The sequence spans 211 residues: Troponin I, cardiac muscle (211 aa).

The tract at residues 1 to 24 (MADESSDAAGEPQPAPAPVRRRSS) is disordered. At Ala-2 the chain carries N-acetylalanine. Residues Ser-5 and Ser-6 each carry the phosphoserine modification. A phosphoserine; by PKA and PKD/PRKD1 mark is found at Ser-23 and Ser-24. Tyr-27 carries the post-translational modification Phosphotyrosine. The residue at position 32 (Thr-32) is a Phosphothreonine; by STK4/MST1. An involved in binding TNC region spans residues 33-80 (EPHAKKKSKISASRKLQLKTLMLQIAKQEMEREAEERRGEKGRVLRTR). Phosphoserine; by PKC/PRKCE is present on residues Ser-43 and Ser-45. Thr-52 carries the phosphothreonine; by STK4/MST1 modification. Residue Thr-79 is modified to Phosphothreonine. 2 positions are modified to phosphothreonine; by STK4/MST1: Thr-130 and Thr-144. Positions 130–151 (TQKIYDLRGKFKRPTLRRVRIS) are involved in binding TNC and actin. Residues Ser-151, Ser-167, and Ser-200 each carry the phosphoserine modification.

It belongs to the troponin I family. Interacts with TRIM63. Binds to actin and tropomyosin. Interacts with STK4/MST1. Phosphorylated at Ser-23 and Ser-24 by PRKD1; phosphorylation reduces myofilament calcium sensitivity. Phosphorylated preferentially at Thr-32. Phosphorylation by STK4/MST1 alters its binding affinity to TNNC1 (cardiac Tn-C) and TNNT2 (cardiac Tn-T). Phosphorylated at Ser-43 and Ser-45 by PRKCE; phosphorylation increases myocardium contractile dysfunction.

Functionally, troponin I is the inhibitory subunit of troponin, the thin filament regulatory complex which confers calcium-sensitivity to striated muscle actomyosin ATPase activity. In Mus musculus (Mouse), this protein is Troponin I, cardiac muscle (Tnni3).